We begin with the raw amino-acid sequence, 257 residues long: Snake venom serine protease nikobin (257 aa).

An N-terminal signal peptide occupies residues 1-18 (MVLIRVLANLLLLQLSYA). Residues 19 to 24 (QKSSEL) constitute a propeptide that is removed on maturation. The region spanning 25–248 (VIGGDECNIN…YSDWIQSIIA (224 aa)) is the Peptidase S1 domain. Disulfide bonds link cysteine 31–cysteine 162, cysteine 49–cysteine 65, cysteine 97–cysteine 255, cysteine 141–cysteine 209, cysteine 173–cysteine 188, and cysteine 199–cysteine 224. Active-site charge relay system residues include histidine 64 and aspartate 109. N-linked (GlcNAc...) asparagine glycosylation is found at asparagine 120 and asparagine 121. Serine 203 functions as the Charge relay system in the catalytic mechanism. N-linked (GlcNAc...) asparagine glycosylation is present at asparagine 250.

The protein belongs to the peptidase S1 family. Snake venom subfamily. As to quaternary structure, monomer. Expressed by the venom gland.

Its subcellular location is the secreted. Functionally, snake venom serine protease that may act in the hemostasis system of the prey. The chain is Snake venom serine protease nikobin (sp-VN) from Vipera nikolskii (Nikolsky's adder).